The sequence spans 80 residues: MPFRFGTQPRRFPVEGGDSSIGLEPGLSSSAACNGKEMSPTRQLRRCPGSHCLTITDVPITVYATMRKPPAQSSKEMHPK.

A disordered region spans residues 1–44 (MPFRFGTQPRRFPVEGGDSSIGLEPGLSSSAACNGKEMSPTRQL).

The protein belongs to the FAM229 family.

The chain is Protein FAM229B (FAM229B) from Macaca fascicularis (Crab-eating macaque).